Reading from the N-terminus, the 454-residue chain is Aminodeoxychorismate synthase component 1 (454 aa).

Residues Ser37, 44–47, and 241–243 contribute to the L-tryptophan site; these read YNRF and PFS. Glu259 acts as the Proton donor in catalysis. Lys275 (N6-(4-deoxychorismate)-lysine intermediate) is an active-site residue.

Belongs to the anthranilate synthase component I family. As to quaternary structure, monomer. Heterodimer consisting of two non-identical subunits: a glutamine amidotransferase subunit (PabA) and a aminodeoxychorismate synthase subunit (PabB). Mg(2+) serves as cofactor.

It catalyses the reaction chorismate + L-glutamine = 4-amino-4-deoxychorismate + L-glutamate. It functions in the pathway cofactor biosynthesis; tetrahydrofolate biosynthesis; 4-aminobenzoate from chorismate: step 1/2. Part of a heterodimeric complex that catalyzes the two-step biosynthesis of 4-amino-4-deoxychorismate (ADC), a precursor of p-aminobenzoate (PABA) and tetrahydrofolate. In the first step, a glutamine amidotransferase (PabA) generates ammonia as a substrate that, along with chorismate, is used in the second step, catalyzed by aminodeoxychorismate synthase (PabB) to produce ADC. This Salmonella typhimurium (strain LT2 / SGSC1412 / ATCC 700720) protein is Aminodeoxychorismate synthase component 1 (pabB).